We begin with the raw amino-acid sequence, 502 residues long: Maturase K (502 aa).

It belongs to the intron maturase 2 family. MatK subfamily.

Its subcellular location is the plastid. The protein localises to the chloroplast. Its function is as follows. Usually encoded in the trnK tRNA gene intron. Probably assists in splicing its own and other chloroplast group II introns. This chain is Maturase K, found in Sisymbrium irio (London rocket).